The primary structure comprises 229 residues: Meiotically up-regulated gene 31 protein (229 aa).

Disordered regions lie at residues 16-68 (EDSA…EEDK) and 189-229 (GLPE…TTWA).

Its subcellular location is the endoplasmic reticulum. In terms of biological role, has a role in meiosis. The chain is Meiotically up-regulated gene 31 protein (mug31) from Schizosaccharomyces pombe (strain 972 / ATCC 24843) (Fission yeast).